We begin with the raw amino-acid sequence, 131 residues long: Large ribosomal subunit protein bL17 (131 aa).

It belongs to the bacterial ribosomal protein bL17 family. Part of the 50S ribosomal subunit. Contacts protein L32.

The protein is Large ribosomal subunit protein bL17 of Sodalis glossinidius (strain morsitans).